The primary structure comprises 433 residues: Ribosomal protein uS12 methylthiotransferase RimO (433 aa).

In terms of domain architecture, MTTase N-terminal spans 6-122; sequence QSIFLLSLGC…IISVLGGSYR (117 aa). [4Fe-4S] cluster is bound by residues C15, C51, C85, C146, C150, and C153. The 231-residue stretch at 132–362 folds into the Radical SAM core domain; sequence LTPPHYAWLK…MELQESIAAE (231 aa). Residues 365–432 enclose the TRAM domain; the sequence is RELEGRVMKV…AYELHGRVND (68 aa).

The protein belongs to the methylthiotransferase family. RimO subfamily. The cofactor is [4Fe-4S] cluster.

It localises to the cytoplasm. It carries out the reaction L-aspartate(89)-[ribosomal protein uS12]-hydrogen + (sulfur carrier)-SH + AH2 + 2 S-adenosyl-L-methionine = 3-methylsulfanyl-L-aspartate(89)-[ribosomal protein uS12]-hydrogen + (sulfur carrier)-H + 5'-deoxyadenosine + L-methionine + A + S-adenosyl-L-homocysteine + 2 H(+). Functionally, catalyzes the methylthiolation of an aspartic acid residue of ribosomal protein uS12. The polypeptide is Ribosomal protein uS12 methylthiotransferase RimO (Prosthecochloris aestuarii (strain DSM 271 / SK 413)).